We begin with the raw amino-acid sequence, 243 residues long: MRTRIIVNGANGKMGILACETLENHEQFEIVAKLSRQDNLGQSILDTKAQIVVDLTRADCVYENSLTIINHGARPVIGTSGLVETQIDELTKLCEIKQIGGIIAPNFSLGAILMMILATKASEYFSEVEIIEGHHQQKLDAPSGTALKTAEMIAAARKKPKNKLPLKELTPGARGGSHHDINIHSLRLPGLLARQEVLFGNIGETLSITHNSIDRRCFMPGIVLACQKVLNLNNLVYGLEHLL.

NAD(+) is bound by residues 9–14 (GANGKM), 78–80 (GTS), and 104–107 (APNF). The Proton donor/acceptor role is filled by His-134. His-135 contributes to the (S)-2,3,4,5-tetrahydrodipicolinate binding site. The Proton donor role is filled by Lys-138. A (S)-2,3,4,5-tetrahydrodipicolinate-binding site is contributed by 144 to 145 (GT).

The protein belongs to the DapB family.

It localises to the cytoplasm. The enzyme catalyses (S)-2,3,4,5-tetrahydrodipicolinate + NAD(+) + H2O = (2S,4S)-4-hydroxy-2,3,4,5-tetrahydrodipicolinate + NADH + H(+). It carries out the reaction (S)-2,3,4,5-tetrahydrodipicolinate + NADP(+) + H2O = (2S,4S)-4-hydroxy-2,3,4,5-tetrahydrodipicolinate + NADPH + H(+). The protein operates within amino-acid biosynthesis; L-lysine biosynthesis via DAP pathway; (S)-tetrahydrodipicolinate from L-aspartate: step 4/4. Functionally, catalyzes the conversion of 4-hydroxy-tetrahydrodipicolinate (HTPA) to tetrahydrodipicolinate. This chain is 4-hydroxy-tetrahydrodipicolinate reductase, found in Legionella pneumophila subsp. pneumophila (strain Philadelphia 1 / ATCC 33152 / DSM 7513).